A 1098-amino-acid polypeptide reads, in one-letter code: PAN2-PAN3 deadenylation complex catalytic subunit PAN2 (1098 aa).

WD repeat units follow at residues 19 to 58 (ASKD…PFQL), 150 to 190 (TGFD…SVKS), 253 to 293 (PFPN…KLNV), and 300 to 338 (PASP…NFVN). The segment at 340–466 (PAPLEEQDIP…SIFHLKSPTS (127 aa)) is linker. Residues 417–442 (RNISQPYQSLREPPGSNSNAPRFISE) are disordered. The region spanning 466–839 (SVPHCYSRLQ…KPVIIVYSEP (374 aa)) is the USP domain. An Exonuclease domain is found at 894–1067 (IAIDAEFVVS…EDAYTALMLF (174 aa)). 4 residues coordinate a divalent metal cation: Asp-897, Glu-899, Asp-1006, and Asp-1059.

This sequence belongs to the peptidase C19 family. PAN2 subfamily. As to quaternary structure, forms a heterotrimer with an asymmetric homodimer of the regulatory subunit PAN3 to form the poly(A)-nuclease (PAN) deadenylation complex. It depends on a divalent metal cation as a cofactor.

The protein localises to the cytoplasm. The enzyme catalyses Exonucleolytic cleavage of poly(A) to 5'-AMP.. With respect to regulation, positively regulated by the regulatory subunit PAN3. Its function is as follows. Catalytic subunit of the poly(A)-nuclease (PAN) deadenylation complex, one of two cytoplasmic mRNA deadenylases involved in mRNA turnover. PAN specifically shortens poly(A) tails of RNA and the activity is stimulated by poly(A)-binding protein PAB1. PAN deadenylation is followed by rapid degradation of the shortened mRNA tails by the CCR4-NOT complex. Deadenylated mRNAs are then degraded by two alternative mechanisms, namely exosome-mediated 3'-5' exonucleolytic degradation, or deadenylation-dependent mRNA decaping and subsequent 5'-3' exonucleolytic degradation by XRN1. May also be involved in post-transcriptional maturation of mRNA poly(A) tails. The chain is PAN2-PAN3 deadenylation complex catalytic subunit PAN2 from Meyerozyma guilliermondii (strain ATCC 6260 / CBS 566 / DSM 6381 / JCM 1539 / NBRC 10279 / NRRL Y-324) (Yeast).